The following is a 250-amino-acid chain: Indole-3-glycerol phosphate synthase (250 aa).

It belongs to the TrpC family.

It carries out the reaction 1-(2-carboxyphenylamino)-1-deoxy-D-ribulose 5-phosphate + H(+) = (1S,2R)-1-C-(indol-3-yl)glycerol 3-phosphate + CO2 + H2O. It participates in amino-acid biosynthesis; L-tryptophan biosynthesis; L-tryptophan from chorismate: step 4/5. This Bacillus velezensis (strain DSM 23117 / BGSC 10A6 / LMG 26770 / FZB42) (Bacillus amyloliquefaciens subsp. plantarum) protein is Indole-3-glycerol phosphate synthase.